Consider the following 111-residue polypeptide: Dynein light chain Tctex-type (111 aa).

Belongs to the dynein light chain Tctex-type family.

The protein localises to the cytoplasm. The protein resides in the cytoskeleton. Acts as a non-catalytic accessory component of a dynein complex. In Dictyostelium discoideum (Social amoeba), this protein is Dynein light chain Tctex-type (dlcA).